The sequence spans 1306 residues: Signaling mucin MSB2 (1306 aa).

An N-terminal signal peptide occupies residues 1-21 (MQFPFACLLSTLVISGSLARA). At 22–1185 (SPFDFIFGNG…VSTSSKSKKK (1164 aa)) the chain is on the extracellular side. Asparagine 30 carries an N-linked (GlcNAc...) asparagine glycan. 5 disordered regions span residues 248–267 (SADF…LSAA), 519–539 (QAGG…SSST), 561–580 (YMAG…LSES), 665–685 (SSIS…SASS), and 709–849 (TSSS…SVSQ). Residues 519 to 528 (QAGGSSMTNP) show a composition bias toward polar residues. Over residues 529 to 539 (SSSTIVYSSST) the composition is skewed to low complexity. Low complexity-rich tracts occupy residues 665 to 674 (SSISSEFSPS) and 709 to 831 (TSSS…TSSQ). 7 consecutive repeat copies span residues 698–714 (SQVS…SSSV), 715–731 (SQVS…SSSV), 732–748 (SQVS…SSSV), 749–765 (SQVS…SSSV), 766–782 (SQVS…SSSV), 783–799 (SQVS…RSSV), and 800–816 (SQVS…RSSV). Residues 698–816 (SQVSDTSVSY…VPSTSSRSSV (119 aa)) form a 7 X 17 AA tandem repeats region. Residues asparagine 859, asparagine 885, asparagine 945, asparagine 1049, and asparagine 1088 are each glycosylated (N-linked (GlcNAc...) asparagine). The segment at 1123–1158 (SNSGGSSDGSSSSNSNSGSSGSGSNSNSGVSSSSGN) is disordered. N-linked (GlcNAc...) asparagine glycosylation is present at asparagine 1175. The helical transmembrane segment at 1186–1206 (IIGLVIGVVVGGCLYILFMIF) threads the bilayer. Residues 1207 to 1306 (AFKYIIRRRI…SQNSLGWNEV (100 aa)) lie on the Cytoplasmic side of the membrane. Residues 1272-1291 (LTNNDSTPTRHNTSSSIPKI) form a disordered region. Serine 1300 carries the phosphoserine modification.

The protein belongs to the HKR1/MSB2 family. As to quaternary structure, interacts with CDC42 and SHO1. O-glycosylated in the Ser/Thr-rich regions.

Its subcellular location is the cell membrane. In terms of biological role, plasma membrane signaling mucin that promotes activation of the MAPK for the filamentous growth pathway. Partially redundant with the SHO1 osmosensing branch for the activation of STE11. The polypeptide is Signaling mucin MSB2 (MSB2) (Saccharomyces cerevisiae (strain ATCC 204508 / S288c) (Baker's yeast)).